The sequence spans 530 residues: Glucocorticoid modulatory element-binding protein 2 (530 aa).

The region spanning 81–163 (EEGENLEAEI…RKIMDSGELD (83 aa)) is the SAND domain. Cysteine 110 contributes to the Zn(2+) binding site. 4 residues coordinate DNA: lysine 136, lysine 140, lysine 143, and arginine 154. Lysine 155 participates in a covalent cross-link: Glycyl lysine isopeptide (Lys-Gly) (interchain with G-Cter in SUMO1); alternate. Lysine 155 participates in a covalent cross-link: Glycyl lysine isopeptide (Lys-Gly) (interchain with G-Cter in SUMO2); alternate. Histidine 167, cysteine 171, and cysteine 175 together coordinate Zn(2+). Residues 304–348 (QMDRSREQYARDLAALEQQCDEHRRRAKELKHKSQHLSNVLMTLT) are a coiled coil. Serine 373 bears the Phosphoserine mark.

Homodimer, and heterodimer of GMEB1 and GMEB2. GMEB1 and GMEB2 form the parvovirus initiator complex (PIF). Interacts with the glucocorticoid receptor (NR3C1). May interact with CREB-binding protein (CBP). Expressed in peripheral blood lymphocytes and fetal liver. Expressed preferentially in reproductive and/or developmentally important cells, such as testis, placenta, bone marrow and fetal tissues.

The protein resides in the nucleus. The protein localises to the cytoplasm. Functionally, trans-acting factor that binds to glucocorticoid modulatory elements (GME) present in the TAT (tyrosine aminotransferase) promoter and increases sensitivity to low concentrations of glucocorticoids. Also binds to the transferrin receptor promoter. Essential auxiliary factor for the replication of parvoviruses. The sequence is that of Glucocorticoid modulatory element-binding protein 2 (GMEB2) from Homo sapiens (Human).